Consider the following 747-residue polypeptide: Protein tyrosine phosphatase domain-containing protein 1 (747 aa).

A disordered region spans residues 1–36 (MAAGVLPQNEDPYSTLVNSSGHAAHMDENSGRPAPK). Residues 11 to 21 (DPYSTLVNSSG) show a composition bias toward polar residues. Positions 82 to 253 (YSSWVTDNIL…LAPLRNIFSC (172 aa)) constitute a Tyrosine-protein phosphatase domain. The active-site Phosphocysteine intermediate is Cys-190. Residues Ser-392, Ser-394, and Ser-543 each carry the phosphoserine modification. The interval 549-570 (SSPKAQFPHGQETQDSTDLSEA) is disordered.

It belongs to the protein-tyrosine phosphatase family. Non-receptor class PTPDC1 subfamily.

May play roles in cilia formation and/or maintenance. In Mus musculus (Mouse), this protein is Protein tyrosine phosphatase domain-containing protein 1 (Ptpdc1).